A 614-amino-acid polypeptide reads, in one-letter code: Adenylate kinase 7 (614 aa).

The segment at 258-503 (PIKICILGPP…KEIGKPRNYG (246 aa)) is adenylate kinase. Residue 268-273 (AVGKSS) coordinates ATP. The tract at residues 288–346 (KMKDVIAEAIAKLEAIVAPKDSVEGEEEGEEEEEEENVDDAQELLDGIKESMEQNAGRL) is NMP. The interval 308 to 327 (DSVEGEEEGEEEEEEENVDD) is disordered. A compositionally biased stretch (acidic residues) spans 311 to 327 (EGEEEGEEEEEEENVDD). AMP-binding positions include 323–346 (ENVD…AGRL), 373–376 (GFPK), and glutamine 380. Positions 376–568 (KTYDQAKDLF…EERELLEVQS (193 aa)) form a coiled coil. The segment at 428–438 (NLPESVVAGTH) is LID. Residue arginine 446 participates in AMP binding. Glycine 478 contacts ATP. Positions 570 to 614 (PLRNYLMTYVMPTLMQGLNECCKVRPEDPVDFLAEYLFKNNPEMQ) are DPY-30.

The protein in the central section; belongs to the adenylate kinase family. It in the C-terminal section; belongs to the dpy-30 family.

It localises to the cytoplasm. The protein localises to the cytosol. It is found in the cell projection. The protein resides in the cilium. Its subcellular location is the flagellum. It catalyses the reaction AMP + ATP = 2 ADP. The catalysed reaction is a 2'-deoxyribonucleoside 5'-diphosphate + ATP = a 2'-deoxyribonucleoside 5'-triphosphate + ADP. It carries out the reaction a ribonucleoside 5'-diphosphate + ATP = a ribonucleoside 5'-triphosphate + ADP. In terms of biological role, nucleoside monophosphate (NMP) kinase that catalyzes the reversible transfer of the terminal phosphate group between nucleoside triphosphates and monophosphates. Has highest activity toward AMP, and weaker activity toward dAMP, CMP and dCMP. Also displays broad nucleoside diphosphate kinase activity. Involved in maintaining ciliary structure and function. The protein is Adenylate kinase 7 (Ak7) of Mus musculus (Mouse).